The following is a 267-amino-acid chain: Undecaprenyl-diphosphatase (267 aa).

8 helical membrane passes run 1 to 21 (MTLF…FLPV), 40 to 60 (GLAI…LYFW), 83 to 103 (AFLA…GLII), 111 to 131 (MMRS…VLYW), 144 to 164 (GWTL…LIPG), 189 to 209 (AMLM…ADVI), 219 to 239 (DGAL…ALMM), and 245 to 265 (VSFT…LVYA).

It belongs to the UppP family.

It is found in the cell inner membrane. It carries out the reaction di-trans,octa-cis-undecaprenyl diphosphate + H2O = di-trans,octa-cis-undecaprenyl phosphate + phosphate + H(+). Catalyzes the dephosphorylation of undecaprenyl diphosphate (UPP). Confers resistance to bacitracin. This is Undecaprenyl-diphosphatase from Roseobacter denitrificans (strain ATCC 33942 / OCh 114) (Erythrobacter sp. (strain OCh 114)).